Reading from the N-terminus, the 425-residue chain is Serine hydroxymethyltransferase (425 aa).

(6S)-5,6,7,8-tetrahydrofolate-binding positions include L128 and 132 to 134 (GHL). N6-(pyridoxal phosphate)lysine is present on K237.

The protein belongs to the SHMT family. Homodimer. The cofactor is pyridoxal 5'-phosphate.

Its subcellular location is the cytoplasm. The enzyme catalyses (6R)-5,10-methylene-5,6,7,8-tetrahydrofolate + glycine + H2O = (6S)-5,6,7,8-tetrahydrofolate + L-serine. It functions in the pathway one-carbon metabolism; tetrahydrofolate interconversion. It participates in amino-acid biosynthesis; glycine biosynthesis; glycine from L-serine: step 1/1. In terms of biological role, catalyzes the reversible interconversion of serine and glycine with tetrahydrofolate (THF) serving as the one-carbon carrier. This reaction serves as the major source of one-carbon groups required for the biosynthesis of purines, thymidylate, methionine, and other important biomolecules. Also exhibits THF-independent aldolase activity toward beta-hydroxyamino acids, producing glycine and aldehydes, via a retro-aldol mechanism. This chain is Serine hydroxymethyltransferase, found in Wolbachia sp. subsp. Drosophila simulans (strain wRi).